A 233-amino-acid polypeptide reads, in one-letter code: Probable translation initiation factor, mitochondrial (233 aa).

The transit peptide at 1-39 (MNSYLQFPHRKLFIQFSYSLTSVFRKCQSRTFMNSQFAS) directs the protein to the mitochondrion.

Belongs to the IF-3 family.

It localises to the mitochondrion. Functionally, may be involved in mitochondrial translation initiation. In Schizosaccharomyces pombe (strain 972 / ATCC 24843) (Fission yeast), this protein is Probable translation initiation factor, mitochondrial.